A 597-amino-acid polypeptide reads, in one-letter code: Protein IQ-DOMAIN 29 (597 aa).

Residues Met1–Leu31 are disordered. IQ domains lie at Leu106–Arg134, Val135–Ser153, and Gly157–Asn183. The tract at residues Val159–Ser173 is calmodulin-binding. Positions Lys264–Val271 match the Nuclear localization signal 1 motif. Disordered stretches follow at residues Phe268 to Ile379 and Leu407 to Arg597. Over residues Ser289–Thr300 the composition is skewed to low complexity. Positions Glu319 to Lys329 are enriched in basic and acidic residues. The Nuclear localization signal 2 signature appears at His356–Asn363. A compositionally biased stretch (basic and acidic residues) spans Lys414–Glu463. Residues Gln467–Thr480 show a composition bias toward polar residues. Over residues Lys481 to Asp500 the composition is skewed to basic and acidic residues. Residues Gly572 to Lys584 show a composition bias toward polar residues. Basic and acidic residues predominate over residues Asp585–Arg597.

This sequence belongs to the IQD family. As to quaternary structure, binds to multiple calmodulin (CaM) in the presence of Ca(2+) and CaM-like proteins.

It is found in the nucleus. It localises to the nucleus envelope. The protein localises to the cytoplasm. Its subcellular location is the cytoskeleton. The protein resides in the cell membrane. May be involved in cooperative interactions with calmodulins or calmodulin-like proteins. Recruits calmodulin proteins to microtubules, thus being a potential scaffold in cellular signaling and trafficking. May associate with nucleic acids and regulate gene expression at the transcriptional or post-transcriptional level. The polypeptide is Protein IQ-DOMAIN 29 (Arabidopsis thaliana (Mouse-ear cress)).